Consider the following 93-residue polypeptide: Protein VNG_0358C (93 aa).

The chain is Protein VNG_0358C from Halobacterium salinarum (strain ATCC 700922 / JCM 11081 / NRC-1) (Halobacterium halobium).